We begin with the raw amino-acid sequence, 318 residues long: ATP phosphoribosyltransferase regulatory subunit (318 aa).

This sequence belongs to the class-II aminoacyl-tRNA synthetase family. HisZ subfamily. Heteromultimer composed of HisG and HisZ subunits.

It is found in the cytoplasm. It functions in the pathway amino-acid biosynthesis; L-histidine biosynthesis; L-histidine from 5-phospho-alpha-D-ribose 1-diphosphate: step 1/9. Its function is as follows. Required for the first step of histidine biosynthesis. May allow the feedback regulation of ATP phosphoribosyltransferase activity by histidine. The protein is ATP phosphoribosyltransferase regulatory subunit of Lactococcus lactis subsp. cremoris (strain SK11).